The primary structure comprises 220 residues: Adenylate kinase (220 aa).

13–18 (GAGKGT) provides a ligand contact to ATP. The tract at residues 33–62 (ATGDMLRSQVARQTELGKEAKKIMDQGGLV) is NMP. Residues T34, R39, 60 to 62 (GLV), 89 to 92 (GFPR), and Q96 each bind AMP. An LID region spans residues 130-167 (GRLVHPGSGRSYHLEFNPPKVPMKDDVTGEPLIQRSDD). ATP-binding positions include R131 and 140–141 (SY). AMP contacts are provided by R164 and R175. ATP is bound at residue Q203.

Belongs to the adenylate kinase family. AK2 subfamily. As to quaternary structure, monomer.

The protein resides in the cytoplasm. It is found in the cytosol. Its subcellular location is the mitochondrion intermembrane space. The protein localises to the nucleus. It catalyses the reaction AMP + ATP = 2 ADP. Its function is as follows. Catalyzes the reversible transfer of the terminal phosphate group between ATP and AMP. Plays an important role in cellular energy homeostasis and in adenine nucleotide metabolism. Adenylate kinase activity is critical for regulation of the phosphate utilization and the AMP de novo biosynthesis pathways. In Schizosaccharomyces pombe (strain 972 / ATCC 24843) (Fission yeast), this protein is Adenylate kinase (adk1).